An 859-amino-acid chain; its full sequence is Protein argonaute-2 (859 aa).

Residues 1–27 are disordered; it reads MYSGAGPALAPPAPPPPIQGYAFKPPP. Y2 is modified (3'-nitrotyrosine). Positions 9-27 are enriched in pro residues; that stretch reads LAPPAPPPPIQGYAFKPPP. Positions 229–348 constitute a PAZ domain; sequence PVIEFVCEVL…LPLEVCNIVA (120 aa). The segment at 311-316 is interaction with guide RNA; it reads YFKDRH. Phosphoserine is present on S387. One can recognise a Piwi domain in the interval 517 to 818; that stretch reads LVVVILPGKT…VAFRARYHLV (302 aa). Positions 524 to 566 are interaction with guide RNA; it reads GKTPVYAEVKRVGDTVLGMATQCVQMKNVQRTTPQTLSNLCLK. Positions 587-590 are interaction with GW182 family members; it reads FQQP. D597 provides a ligand contact to a divalent metal cation. The interval 650–660 is interaction with GW182 family members; that stretch reads LIQFYKSTRFK. D669 serves as a coordination point for a divalent metal cation. The residue at position 700 (P700) is a 4-hydroxyproline. Interaction with guide RNA stretches follow at residues 709 to 710, 753 to 761, and 790 to 812; these read KR, HAGIQGTSR, and YVRC…VAFR. H807 is an a divalent metal cation binding site. Phosphoserine is present on residues S824, S828, S831, and S834.

It belongs to the argonaute family. Ago subfamily. Interacts with DICER1 through its Piwi domain and with TARBP2 during assembly of the RNA-induced silencing complex (RISC). Together, DICER1, AGO2 and TARBP2 constitute the trimeric RISC loading complex (RLC), or micro-RNA (miRNA) loading complex (miRLC). Within the RLC/miRLC, DICER1 and TARBP2 are required to process precursor miRNAs (pre-miRNAs) to mature miRNAs and then load them onto AGO2. AGO2 bound to the mature miRNA constitutes the minimal RISC and may subsequently dissociate from DICER1 and TARBP2. Note however that the term RISC has also been used to describe the trimeric RLC/miRLC. The formation of RISC complexes containing siRNAs rather than miRNAs appears to occur independently of DICER1. Interacts with AGO1. Also interacts with DDB1, DDX5, DDX6, DDX20, DHX30, DHX36, DDX47, DHX9, ELAVL, FXR1, GEMIN4, HNRNPF, IGF2BP1, ILF3, IMP8, MATR3, PABPC1, PRMT5, P4HA1, P4HB, RBM4, SART3, TNRC6A, TNRC6B, UPF1 and YBX1. Interacts with the P-body components DCP1A and XRN1. Associates with polysomes and messenger ribonucleoproteins (mNRPs). Interacts with RBM4; the interaction is modulated under stress-induced conditions, occurs under both cell proliferation and differentiation conditions and in an RNA- and phosphorylation-independent manner. Interacts with LIMD1, WTIP and AJUBA. Interacts with TRIM71; the interaction increases in presence of RNA. Interacts with APOBEC3G in an RNA-dependent manner. Interacts with APOBEC3A, APOBEC3C, APOBEC3F and APOBEC3H. Interacts with DICER1, TARBP2, EIF6, MOV10 and RPL7A (60S ribosome subunit); they form a large RNA-induced silencing complex (RISC). Interacts with FMR1. Interacts with ZFP36. Found in a complex, composed of AGO2, CHD7 and ARB2A. Interacts with RC3H1; the interaction is RNA independent. Interacts with SND1. Interacts with SYT11. Interacts with CLNK. Interacts with GARRE1. Interacts with GRB2; this interaction is important for the formation of a ternary complex containing GRB2, AGO2 and DICER1. As to quaternary structure, (Microbial infection) Interacts with Epstein-Barr virus (EBV) tegument protein BGLF2; this interaction participates in the regulation of cellular miRNA by the virus, leading to enhanced SUMOylation. In terms of assembly, (Microbial infection) Interacts with rotavirus A non-structural protein 5; this interaction probably plays a role in the sequestration of AGO2 in viral factories. (Microbial infection) Interacts with human herpesvirus 8 protein MTA/ORF57; this interaction inhibits P-body formation. The cofactor is Mg(2+). Mn(2+) serves as cofactor. In terms of processing, hydroxylated. 4-hydroxylation appears to enhance protein stability but is not required for miRNA-binding or endonuclease activity. Ubiquitinated on surface-exposed lysines by a SCF-like E3 ubiquitin-protein ligase complex containing ZSWIM8 during target-directed microRNA degradation (TDMD), a process that mediates degradation of microRNAs (miRNAs). Ubiquitination by the SCF-like E3 ubiquitin-protein ligase complex containing ZSWIM8 leads to its subsequent degradation, thereby exposing miRNAs for degradation. ZSWIM8 recognizes and binds AGO2 when it is engaged with a TDMD target. Post-translationally, phosphorylated. A phosphorylation cycle of C-terminal serine cluster (Ser-824-Ser-834) regulates the release of target mRNAs. Target-binding leads to phosphorylation of these residues by CSNK1A1, which reduces the affinity of AGO2 for mRNA and enables target release. The ANKRD52-PPP6C phosphatase complex dephosphorylates the residues, which primes AGO2 for binding a new target. In terms of processing, phosphorylation at Ser-387 by AKT3; leads to up-regulate translational repression of microRNA target and down-regulate endonucleolytic cleavage.

Its subcellular location is the cytoplasm. The protein localises to the P-body. It is found in the nucleus. It catalyses the reaction Endonucleolytic cleavage to 5'-phosphomonoester.. Its activity is regulated as follows. Inhibited by EDTA. In terms of biological role, required for RNA-mediated gene silencing (RNAi) by the RNA-induced silencing complex (RISC). The 'minimal RISC' appears to include AGO2 bound to a short guide RNA such as a microRNA (miRNA) or short interfering RNA (siRNA). These guide RNAs direct RISC to complementary mRNAs that are targets for RISC-mediated gene silencing. The precise mechanism of gene silencing depends on the degree of complementarity between the miRNA or siRNA and its target. Binding of RISC to a perfectly complementary mRNA generally results in silencing due to endonucleolytic cleavage of the mRNA specifically by AGO2. Binding of RISC to a partially complementary mRNA results in silencing through inhibition of translation, and this is independent of endonuclease activity. May inhibit translation initiation by binding to the 7-methylguanosine cap, thereby preventing the recruitment of the translation initiation factor eIF4-E. May also inhibit translation initiation via interaction with EIF6, which itself binds to the 60S ribosomal subunit and prevents its association with the 40S ribosomal subunit. The inhibition of translational initiation leads to the accumulation of the affected mRNA in cytoplasmic processing bodies (P-bodies), where mRNA degradation may subsequently occur. In some cases RISC-mediated translational repression is also observed for miRNAs that perfectly match the 3' untranslated region (3'-UTR). Can also up-regulate the translation of specific mRNAs under certain growth conditions. Binds to the AU element of the 3'-UTR of the TNF (TNF-alpha) mRNA and up-regulates translation under conditions of serum starvation. Also required for transcriptional gene silencing (TGS), in which short RNAs known as antigene RNAs or agRNAs direct the transcriptional repression of complementary promoter regions. (Microbial infection) Upon Sars-CoV-2 infection, associates with viral miRNA-like small RNA, CoV2-miR-O7a, and may repress mRNAs, such as BATF2, to evade the IFN response. This is Protein argonaute-2 from Homo sapiens (Human).